A 274-amino-acid polypeptide reads, in one-letter code: Bis(5'-nucleosyl)-tetraphosphatase, symmetrical (274 aa).

It belongs to the Ap4A hydrolase family.

The enzyme catalyses P(1),P(4)-bis(5'-adenosyl) tetraphosphate + H2O = 2 ADP + 2 H(+). Hydrolyzes diadenosine 5',5'''-P1,P4-tetraphosphate to yield ADP. The chain is Bis(5'-nucleosyl)-tetraphosphatase, symmetrical from Janthinobacterium sp. (strain Marseille) (Minibacterium massiliensis).